Here is a 316-residue protein sequence, read N- to C-terminus: Epiphycan (316 aa).

An N-terminal signal peptide occupies residues 1 to 23 (MKTFVNIFLGFFIFESVGAVPIT). Ser98 carries an O-linked (Xyl...) (dermatan sulfate) serine glycan. Positions 100–137 (VLVPQTQDGLPTCLLCTCLGTTVYCDDRELDAVPPLPK) constitute an LRRNT domain. Residues Cys112 and Cys124 are joined by a disulfide bond. 6 LRR repeats span residues 138–159 (NTMYFYSRYNRIRKINKNDFAN), 162–183 (NLKRIDLTANLISEIHEDAFRR), 186–207 (QLLELVLRDNRIRQLPELPSTL), 232–252 (ELQHLYITDNNLDHVPLPLPE), 253–274 (SLQALHLQNNNIQEMHEDTFCK), and 284–304 (ALEDIRLDGNPINLSKTPYAY). Residues Cys273 and Cys306 are joined by a disulfide bond. Asn296 is a glycosylation site (N-linked (GlcNAc...) asparagine).

This sequence belongs to the small leucine-rich proteoglycan (SLRP) family. SLRP class III subfamily. Post-translationally, the O-linked glycosaminoglycan chain(s) are dermatan sulfate. Preferentially expressed in flattened chondrocytes of developing chick limb cartilage. Also found in the cartilage peripheral zone bordering with bone marrow cavity.

The protein localises to the secreted. Its subcellular location is the extracellular space. It is found in the extracellular matrix. Functionally, may have a role in bone formation and also in establishing the ordered structure of cartilage through matrix organization. In Gallus gallus (Chicken), this protein is Epiphycan (EPYC).